A 199-amino-acid chain; its full sequence is Holliday junction branch migration complex subunit RuvA (199 aa).

Residues 1-64 are domain I; sequence MIGRITGILL…EDGHFLYGFA (64 aa). The domain II stretch occupies residues 65–143; that stretch reads SADERAAFRQ…RALPGFGAST (79 aa). The tract at residues 144 to 152 is flexible linker; that stretch reads VPGAAAQPA. The tract at residues 152–199 is domain III; the sequence is ADSRSDILNALLALGYSDKEAQSALKAIPPETGVSDGIRQALKLLSKA.

This sequence belongs to the RuvA family. Homotetramer. Forms an RuvA(8)-RuvB(12)-Holliday junction (HJ) complex. HJ DNA is sandwiched between 2 RuvA tetramers; dsDNA enters through RuvA and exits via RuvB. An RuvB hexamer assembles on each DNA strand where it exits the tetramer. Each RuvB hexamer is contacted by two RuvA subunits (via domain III) on 2 adjacent RuvB subunits; this complex drives branch migration. In the full resolvosome a probable DNA-RuvA(4)-RuvB(12)-RuvC(2) complex forms which resolves the HJ.

Its subcellular location is the cytoplasm. Its function is as follows. The RuvA-RuvB-RuvC complex processes Holliday junction (HJ) DNA during genetic recombination and DNA repair, while the RuvA-RuvB complex plays an important role in the rescue of blocked DNA replication forks via replication fork reversal (RFR). RuvA specifically binds to HJ cruciform DNA, conferring on it an open structure. The RuvB hexamer acts as an ATP-dependent pump, pulling dsDNA into and through the RuvAB complex. HJ branch migration allows RuvC to scan DNA until it finds its consensus sequence, where it cleaves and resolves the cruciform DNA. The sequence is that of Holliday junction branch migration complex subunit RuvA from Aromatoleum aromaticum (strain DSM 19018 / LMG 30748 / EbN1) (Azoarcus sp. (strain EbN1)).